The sequence spans 882 residues: Valine--tRNA ligase (882 aa).

A 'HIGH' region motif is present at residues 52–62 (PNVTGSLHMGH). Residues 539 to 543 (KMSKS) carry the 'KMSKS' region motif. K542 provides a ligand contact to ATP. The stretch at 816-882 (IDVAAERRRL…RINARLAVLQ (67 aa)) forms a coiled coil.

This sequence belongs to the class-I aminoacyl-tRNA synthetase family. ValS type 1 subfamily. Monomer.

The protein resides in the cytoplasm. The enzyme catalyses tRNA(Val) + L-valine + ATP = L-valyl-tRNA(Val) + AMP + diphosphate. Its function is as follows. Catalyzes the attachment of valine to tRNA(Val). As ValRS can inadvertently accommodate and process structurally similar amino acids such as threonine, to avoid such errors, it has a 'posttransfer' editing activity that hydrolyzes mischarged Thr-tRNA(Val) in a tRNA-dependent manner. This is Valine--tRNA ligase from Mycolicibacterium paratuberculosis (strain ATCC BAA-968 / K-10) (Mycobacterium paratuberculosis).